The primary structure comprises 237 residues: Deoxyribose-phosphate aldolase (237 aa).

Residue D94 is the Proton donor/acceptor of the active site. K158 serves as the catalytic Schiff-base intermediate with acetaldehyde. The Proton donor/acceptor role is filled by K187.

The protein belongs to the DeoC/FbaB aldolase family. DeoC type 1 subfamily.

It is found in the cytoplasm. The enzyme catalyses 2-deoxy-D-ribose 5-phosphate = D-glyceraldehyde 3-phosphate + acetaldehyde. It participates in carbohydrate degradation; 2-deoxy-D-ribose 1-phosphate degradation; D-glyceraldehyde 3-phosphate and acetaldehyde from 2-deoxy-alpha-D-ribose 1-phosphate: step 2/2. In terms of biological role, catalyzes a reversible aldol reaction between acetaldehyde and D-glyceraldehyde 3-phosphate to generate 2-deoxy-D-ribose 5-phosphate. This is Deoxyribose-phosphate aldolase from Lactobacillus acidophilus (strain ATCC 700396 / NCK56 / N2 / NCFM).